Here is a 162-residue protein sequence, read N- to C-terminus: MNIPFRVGQGFDVHALVEGRPLIIGGVTIAHTHGLLGHSDADVLLHAVTDALLGGAGLGDIGRHFPDTDPAYRGADSRVLLRAAFDKVRAAGWAPVNVDATIHAQAPKIGPHAAAMVANIAADLALDAGAVNIKAKTNEGLGYLGRKEGIAANVVVLLARAG.

Positions 12 and 14 each coordinate a divalent metal cation. 4-CDP-2-C-methyl-D-erythritol 2-phosphate-binding positions include 12-14 and 38-39; these read DVH and HS. Histidine 46 contributes to the a divalent metal cation binding site. 4-CDP-2-C-methyl-D-erythritol 2-phosphate is bound by residues 60–62, 65–69, and arginine 146; these read DIG and FPDTD.

Belongs to the IspF family. Homotrimer. A divalent metal cation serves as cofactor.

The enzyme catalyses 4-CDP-2-C-methyl-D-erythritol 2-phosphate = 2-C-methyl-D-erythritol 2,4-cyclic diphosphate + CMP. The protein operates within isoprenoid biosynthesis; isopentenyl diphosphate biosynthesis via DXP pathway; isopentenyl diphosphate from 1-deoxy-D-xylulose 5-phosphate: step 4/6. Its function is as follows. Involved in the biosynthesis of isopentenyl diphosphate (IPP) and dimethylallyl diphosphate (DMAPP), two major building blocks of isoprenoid compounds. Catalyzes the conversion of 4-diphosphocytidyl-2-C-methyl-D-erythritol 2-phosphate (CDP-ME2P) to 2-C-methyl-D-erythritol 2,4-cyclodiphosphate (ME-CPP) with a corresponding release of cytidine 5-monophosphate (CMP). This is 2-C-methyl-D-erythritol 2,4-cyclodiphosphate synthase from Bordetella parapertussis (strain 12822 / ATCC BAA-587 / NCTC 13253).